The sequence spans 485 residues: Carbohydrate sulfotransferase 7 (485 aa).

At 1 to 12 the chain is on the cytoplasmic side; the sequence is MKGRRRRRREYC. A helical; Signal-anchor for type II membrane protein transmembrane segment spans residues 13–33; it reads KFTLLLALYTLLLLLVPSVLD. The Lumenal segment spans residues 34–485; it reads SGSEQDKGGR…PLETNANWAT (452 aa). The interval 66-88 is disordered; it reads EQGAEVRFQAEGNPDRSPRPQGN. An N-linked (GlcNAc...) asparagine glycan is attached at Asn-88. 109–115 provides a ligand contact to 3'-phosphoadenylyl sulfate; sequence WRTGSSF. Residue Asn-185 is glycosylated (N-linked (GlcNAc...) asparagine). 277 to 285 serves as a coordination point for 3'-phosphoadenylyl sulfate; the sequence is RDPRAVHNS. Residue Asn-406 is glycosylated (N-linked (GlcNAc...) asparagine). At Ser-461 the chain carries Phosphoserine. The segment covering 465–475 has biased composition (basic and acidic residues); it reads RDVKTVRKGET. Residues 465–485 form a disordered region; sequence RDVKTVRKGETPLETNANWAT.

The protein belongs to the sulfotransferase 1 family. Gal/GlcNAc/GalNAc subfamily.

The protein localises to the golgi apparatus membrane. The catalysed reaction is chondroitin beta-D-glucuronate + n 3'-phosphoadenylyl sulfate = chondroitin 6'-sulfate + n adenosine 3',5'-bisphosphate + n H(+). Functionally, sulfotransferase that utilizes 3'-phospho-5'-adenylyl sulfate (PAPS) as sulfonate donor to catalyze the transfer of sulfate to position 6 of non-reducing N-acetylglucosamine (GlcNAc) residues. Preferentially acts on mannose-linked GlcNAc. Also able to catalyze the transfer of sulfate to position 6 of the N-acetylgalactosamine (GalNAc) residue of chondroitin. Also acts on core 2 mucin-type oligosaccharide and N-acetyllactosamine oligomer with a lower efficiency. Has weak or no activity toward keratan sulfate and oligosaccharides containing the Galbeta1-4GlcNAc. Catalyzes 6-O-sulfation of beta-benzyl GlcNAc but not alpha- or beta-benzyl GalNAc. The polypeptide is Carbohydrate sulfotransferase 7 (Chst7) (Rattus norvegicus (Rat)).